The sequence spans 683 residues: Long-chain-fatty-acid--CoA ligase 5 (683 aa).

The helical; Signal-anchor for type III membrane protein transmembrane segment at 12–32 threads the bilayer; the sequence is LPTPALICILTFGAAIFLWLI. I32 carries the phosphoserine modification. At 33 to 683 the chain is on the cytoplasmic side; the sequence is TRPQPVLPLL…IDSLYEHIQD (651 aa). N6-acetyllysine is present on K361.

Belongs to the ATP-dependent AMP-binding enzyme family. Mg(2+) serves as cofactor.

The protein localises to the mitochondrion. It is found in the endoplasmic reticulum. Its subcellular location is the mitochondrion outer membrane. The protein resides in the endoplasmic reticulum membrane. It localises to the cell membrane. It carries out the reaction a long-chain fatty acid + ATP + CoA = a long-chain fatty acyl-CoA + AMP + diphosphate. The enzyme catalyses (5Z,8Z,11Z,14Z)-eicosatetraenoate + ATP + CoA = (5Z,8Z,11Z,14Z)-eicosatetraenoyl-CoA + AMP + diphosphate. The catalysed reaction is hexadecanoate + ATP + CoA = hexadecanoyl-CoA + AMP + diphosphate. It catalyses the reaction (E)-hexadec-2-enoate + ATP + CoA = (2E)-hexadecenoyl-CoA + AMP + diphosphate. It carries out the reaction 15-hydroxy-(5Z,8Z,11Z,13E)-eicosatetraenoate + ATP + CoA = 15-hydroxy-(5Z,8Z,11Z,13E)-eicosatetraenoyl-CoA + AMP + diphosphate. The enzyme catalyses 12-hydroxy-(5Z,8Z,10E,14Z)-eicosatetraenoate + ATP + CoA = 12-hydroxy-(5Z,8Z,10E,14Z)-eicosatetraenoyl-CoA + AMP + diphosphate. The catalysed reaction is 5-hydroxy-(6E,8Z,11Z,14Z)-eicosatetraenoate + ATP + CoA = 5-hydroxy-(6E,8Z,11Z,14Z)-eicosatetraenoyl-CoA + AMP + diphosphate. It catalyses the reaction 14,15-epoxy-(5Z,8Z,11Z)-eicosatrienoate + ATP + CoA = 14,15-epoxy-(5Z,8Z,11Z)-eicosatrienoyl-CoA + AMP + diphosphate. It carries out the reaction 11,12-epoxy-(5Z,8Z,14Z)-eicosatrienoate + ATP + CoA = 11,12-epoxy-(5Z,8Z,14Z)-eicosatrienoyl-CoA + AMP + diphosphate. The enzyme catalyses (9Z)-octadecenoate + ATP + CoA = (9Z)-octadecenoyl-CoA + AMP + diphosphate. In terms of biological role, catalyzes the conversion of long-chain fatty acids to their active form acyl-CoAs for both synthesis of cellular lipids, and degradation via beta-oxidation. ACSL5 may activate fatty acids from exogenous sources for the synthesis of triacylglycerol destined for intracellular storage. Utilizes a wide range of saturated fatty acids with a preference for C16-C18 unsaturated fatty acids. It was suggested that it may also stimulate fatty acid oxidation. At the villus tip of the crypt-villus axis of the small intestine may sensitize epithelial cells to apoptosis specifically triggered by the death ligand TRAIL. May have a role in the survival of glioma cells. This Homo sapiens (Human) protein is Long-chain-fatty-acid--CoA ligase 5.